We begin with the raw amino-acid sequence, 239 residues long: Tetratricopeptide repeat protein 9B (239 aa).

Disordered stretches follow at residues 1-57 and 99-126; these read MQRG…LGAA and QGARPSGLPAPAPGPTSSPGPARLSEEQ. Residues Ser-7 and Ser-27 each carry the phosphoserine modification. Residues 16 to 31 show a composition bias toward pro residues; that stretch reads PEPPPRPPPALSPPGS. The TPR 1 repeat unit spans residues 65-99; sequence AVAFKAEGQRCYREKKFREAIGKYHRALLQLKAAQ. Positions 106–116 are enriched in pro residues; sequence LPAPAPGPTSS. The TPR 2 repeat unit spans residues 171 to 204; sequence FKATYRAGIAFYHLGDYARALRYLQEARSREPTD.

This sequence belongs to the TTC9 family.

The protein is Tetratricopeptide repeat protein 9B (TTC9B) of Homo sapiens (Human).